The chain runs to 145 residues: MAEQQPSKEEKKEDKKDEKEEELPAPSVQQSIRQLPKIQITDDDKGEQLPECTEGEWDASDEPFSAELLNVKNAPNKVSVFSGPYRSKETIEKIKKFRAAMPPVIPIIDERPDKLAQMMSRIFSEIIDGRDLSKIKVTVSTQLPQ.

Positions 1 to 18 (MAEQQPSKEEKKEDKKDE) are enriched in basic and acidic residues. Residues 1-61 (MAEQQPSKEE…CTEGEWDASD (61 aa)) form a disordered region.

This is an uncharacterized protein from Caenorhabditis elegans.